A 145-amino-acid polypeptide reads, in one-letter code: L-alanine exporter AlaE (145 aa).

The next 4 helical transmembrane spans lie at 16–36 (FALV…LSGM), 42–62 (LSSR…YGLY), 86–106 (LFAY…VIGA), and 111–131 (ILTA…TYGY).

Belongs to the AlaE exporter family.

The protein localises to the cell inner membrane. In terms of biological role, exports L-alanine. The protein is L-alanine exporter AlaE of Pectobacterium parmentieri (strain WPP163) (Pectobacterium wasabiae (strain WPP163)).